The primary structure comprises 198 residues: Ion-translocating oxidoreductase complex subunit B (198 aa).

Residues 1–26 (MTTIMIAVLAIALLATLFGAILGFAS) are hydrophobic. Residues 32–90 (EADPIVDQIDAILPQTQCGQCGYPGCRPYAEAIANGDSINKCPPGGQATIEKLADLMGV) enclose the 4Fe-4S domain. [4Fe-4S] cluster-binding residues include Cys49, Cys52, Cys57, Cys73, Cys114, Cys117, Cys120, Cys124, Cys144, Cys147, Cys150, and Cys154. 4Fe-4S ferredoxin-type domains are found at residues 105-134 (KVAF…GGTK) and 135-164 (ALHT…MIPL).

This sequence belongs to the 4Fe4S bacterial-type ferredoxin family. RnfB subfamily. The complex is composed of six subunits: RnfA, RnfB, RnfC, RnfD, RnfE and RnfG. The cofactor is [4Fe-4S] cluster.

The protein localises to the cell inner membrane. Part of a membrane-bound complex that couples electron transfer with translocation of ions across the membrane. The protein is Ion-translocating oxidoreductase complex subunit B of Vibrio vulnificus (strain CMCP6).